The primary structure comprises 247 residues: Anionic trypsin (247 aa).

The first 15 residues, 1 to 15 (MHPLLILAFVGAAVA), serve as a signal peptide directing secretion. The propeptide at 16-23 (FPSDDDDK) is activation peptide. The region spanning 24–244 (IVGGYTCAEN…YVDWIQETIA (221 aa)) is the Peptidase S1 domain. Disulfide bonds link C30/C160, C48/C64, C132/C233, C139/C206, C171/C185, and C196/C220. H63 serves as the catalytic Charge relay system. 4 residues coordinate Ca(2+): E75, N77, V80, and E85. The active-site Charge relay system is D107. S200 (charge relay system) is an active-site residue.

Belongs to the peptidase S1 family. Ca(2+) serves as cofactor. Post-translationally, not sulfated on tyrosine residue(s).

The protein localises to the secreted. It is found in the extracellular space. The catalysed reaction is Preferential cleavage: Arg-|-Xaa, Lys-|-Xaa.. This chain is Anionic trypsin, found in Bos taurus (Bovine).